We begin with the raw amino-acid sequence, 314 residues long: Tudor-interacting repair regulator protein (314 aa).

The N-myristoyl glycine moiety is linked to residue Gly-2.

Belongs to the Nudix hydrolase family. TIRR subfamily. As to quaternary structure, interacts (via the cytoplasmic part) with syndecan-4 (SDC4), but not with other syndecan proteins. In terms of processing, myristoylated in vitro; additional evidence is however required to confirm myristoylation in vivo. As to expression, ubiquitously expressed. Expressed in embryonic brain, eyes, gizzard, heart, intestine, kidney, liver, tibia and skin.

Its subcellular location is the nucleus. It is found in the cytoplasm. The protein resides in the cytoskeleton. It localises to the cell membrane. The protein localises to the cell junction. Its subcellular location is the focal adhesion. Functionally, key regulator of TP53BP1 required to stabilize TP53BP1 and regulate its recruitment to chromatin. The chain is Tudor-interacting repair regulator protein (NUDT16L1) from Gallus gallus (Chicken).